Consider the following 479-residue polypeptide: Anaerobic nitric oxide reductase flavorubredoxin (479 aa).

The segment at 30 to 210 (LRGSSYNSYL…PFSRLVTPKI (181 aa)) is zinc metallo-hydrolase. The Fe cation site is built by His-79, Glu-81, Asp-83, His-147, Asp-166, and His-227. The Flavodoxin-like domain occupies 254 to 393 (ITIFYDTMSN…LCREHGREIA (140 aa)). FMN is bound by residues 260–264 (TMSNN) and 342–369 (AFGSHGWSGGAMDRLSTRLQDAGFEMSL). Residues 423–474 (GPRMQCSVCQWIYDPAKGEPMQDVAPGTPWSEVPDNFLCPECSLGKDVFDEL) form the Rubredoxin-like domain. Fe cation-binding residues include Cys-428, Cys-431, Cys-461, and Cys-464.

The protein in the N-terminal section; belongs to the zinc metallo-hydrolase group 3 family. Homotetramer. Fe cation is required as a cofactor. It depends on FMN as a cofactor.

The protein localises to the cytoplasm. It participates in nitrogen metabolism; nitric oxide reduction. In terms of biological role, anaerobic nitric oxide reductase; uses NADH to detoxify nitric oxide (NO), protecting several 4Fe-4S NO-sensitive enzymes. Has at least 2 reductase partners, only one of which (NorW, flavorubredoxin reductase) has been identified. NO probably binds to the di-iron center; electrons enter from the NorW at rubredoxin and are transferred sequentially to the FMN center and the di-iron center. Also able to function as an aerobic oxygen reductase. This chain is Anaerobic nitric oxide reductase flavorubredoxin, found in Shigella flexneri serotype 5b (strain 8401).